We begin with the raw amino-acid sequence, 382 residues long: uncharacterized protein (382 aa).

Transmembrane regions (helical) follow at residues 8-28, 39-61, 75-95, 102-122, 131-151, 157-177, 204-224, 236-256, 265-284, 289-311, 325-345, and 349-369; these read VLLL…LNTL, PTWQ…TLLT, YLAS…VGFW, FIAG…LMCS, LLAA…LMIS, LMSV…PLLF, LGVN…GLMP, GIGF…WPIG, LLVL…AMLG, APAL…AWAC, ALLL…AMLM, and SDNL…LMLL.

It belongs to the major facilitator superfamily. YcaD (TC 2.A.1.26) family.

The protein localises to the cell inner membrane. This is an uncharacterized protein from Enterobacter sp. (strain 638).